A 337-amino-acid polypeptide reads, in one-letter code: Putative olfactory receptor 1F12P (337 aa).

Topologically, residues 1 to 25 (MEGKNQTNISEFLLLGFSSWQQQQV) are extracellular. Asn5 and Asn8 each carry an N-linked (GlcNAc...) asparagine glycan. A helical transmembrane segment spans residues 26–49 (LLFALFLCLYLTGLFGNLLILLAI). Topologically, residues 50-57 (GSDHCLHT) are cytoplasmic. A helical membrane pass occupies residues 58 to 79 (PMYFFLANLSLVDLCLPSATVP). Over 80–100 (KMLLNIQTQTQTISYPGCLAQ) the chain is Extracellular. Cys97 and Cys189 are disulfide-bonded. Residues 101 to 120 (MYFCMMFANMDNFLLTVMAY) traverse the membrane as a helical segment. Residues 121–139 (DRYVAICHPLHYSTIMALR) are Cytoplasmic-facing. A helical transmembrane segment spans residues 140 to 158 (LCASLVAAPWVIAILNPLL). At 159–196 (HTLMMAHLHFCSDNVIHHFFCDINSLLPLSCSDTSLNQ) the chain is on the extracellular side. Residues 197–219 (LSVLATVGLIFVVPSVCILVSYI) traverse the membrane as a helical segment. The Cytoplasmic portion of the chain corresponds to 220–236 (LIVSAVMKVPSAQGKLK). Residues 237–259 (AFSTCGSHLALVILFYGAITGVY) traverse the membrane as a helical segment. The Extracellular portion of the chain corresponds to 260–272 (MSPLSNHSTEKDS). Asn265 is a glycosylation site (N-linked (GlcNAc...) asparagine). Residues 273–292 (AASVIFMVVAPVLNPFIYSL) form a helical membrane-spanning segment. The Cytoplasmic segment spans residues 293–337 (RNNELKGTLKKTLSRPGAVAHACNPSTLGGRGGWIMRSGDRDHPG).

This sequence belongs to the G-protein coupled receptor 1 family.

The protein resides in the cell membrane. Odorant receptor. The protein is Putative olfactory receptor 1F12P of Homo sapiens (Human).